Consider the following 43-residue polypeptide: Bacteriocin leucocin-C (43 aa).

Residues C9 and C14 are joined by a disulfide bond.

The protein localises to the secreted. In terms of biological role, inhibits a wide spectrum of lactic acid bacteria. The protein is Bacteriocin leucocin-C of Leuconostoc mesenteroides.